A 328-amino-acid chain; its full sequence is Tetraacyldisaccharide 4'-kinase (328 aa).

55–62 (TAGGNGKT) contributes to the ATP binding site.

It belongs to the LpxK family.

The enzyme catalyses a lipid A disaccharide + ATP = a lipid IVA + ADP + H(+). It functions in the pathway glycolipid biosynthesis; lipid IV(A) biosynthesis; lipid IV(A) from (3R)-3-hydroxytetradecanoyl-[acyl-carrier-protein] and UDP-N-acetyl-alpha-D-glucosamine: step 6/6. In terms of biological role, transfers the gamma-phosphate of ATP to the 4'-position of a tetraacyldisaccharide 1-phosphate intermediate (termed DS-1-P) to form tetraacyldisaccharide 1,4'-bis-phosphate (lipid IVA). The chain is Tetraacyldisaccharide 4'-kinase from Escherichia coli O7:K1 (strain IAI39 / ExPEC).